The chain runs to 4870 residues: Malformin synthetase mlfA (4870 aa).

The tract at residues 106 to 497 is adenylation 1; that stretch reads ERRAANRPHS…CGRADTQVKL (392 aa). The 77-residue stretch at 635 to 711 folds into the Carrier 1 domain; sequence LGLSQLEQEI…EASSLAEVQE (77 aa). O-(pantetheine 4'-phosphoryl)serine is present on serine 672. The condensation 1 stretch occupies residues 749–1133; it reads EDVFPCTTMQ…ALNTLTLLQA (385 aa). Positions 1161–1550 are adenylation 2; it reads DRWVTRQPES…GRKDTQVKLR (390 aa). The 78-residue stretch at 1688 to 1765 folds into the Carrier 2 domain; the sequence is TASSKLELTL…QLAAILGEAT (78 aa). An O-(pantetheine 4'-phosphoryl)serine modification is found at serine 1725. 2 disordered regions span residues 1764-1794 and 1829-1859; these read ATGQPESSASSTTEEGFTFSTPDDSSTNDGV and GSSSCKTPSVSSSSSSSSSRKKKSAKVVSPV. Composition is skewed to low complexity over residues 1769 to 1792 and 1830 to 1846; these read ESSASSTTEEGFTFSTPDDSSTND and SSSCKTPSVSSSSSSSS. Residues 1898–2313 form a condensation 2 region; sequence EDIYPATALQ…GVSYRDKQTL (416 aa). The adenylation 3 stretch occupies residues 2336–2728; that stretch reads VRTPHAPAVF…IGRRDGQLKL (393 aa). Positions 2864–2940 constitute a Carrier 3 domain; the sequence is RPATAQEREM…QLMRHLSANG (77 aa). Serine 2901 bears the O-(pantetheine 4'-phosphoryl)serine mark. 2 condensation regions span residues 2957 to 3422 and 3443 to 3862; these read WVPL…TYDQ and DIYP…EQLV. An adenylation 4 region spans residues 3887 to 4277; sequence HSSREAACAW…VGRKDNQIKF (391 aa). The Carrier 4 domain maps to 4411–4487; it reads MPFTAAECKM…DLAYRTANLV (77 aa). Serine 4448 bears the O-(pantetheine 4'-phosphoryl)serine mark. The segment at 4524–4837 is condensation 5; sequence EVLPTTSFQR…LQTIVQHQNN (314 aa).

This sequence belongs to the NRP synthetase family.

Its pathway is secondary metabolite biosynthesis. Its function is as follows. Nonribosomal peptide synthetase; part of the gene cluster that mediates the biosynthesis of malformins, cyclic pentapeptides with a disulfide bond between 2 consecutive cysteins, that show potential anti-tumor as well as antimalarial and antitrypanosomal properties. The nonribosomal peptide synthetase mlfA is responsible of the formation of the cyclic pentapeptide. The malformin biosynthesis clusters in malformin-producing fungi also contain enzymes involved in the formation of the disulfide bond between the two consecutive cysteins within malformins, in addition to additional tailoring enzymes such as methyltransferases or oxidoreductases. They are also composed of up to 4 major facilitator superfamily transporters, and transcription factors probably involved in the regulation of the expression of those clusters. This is Malformin synthetase mlfA from Aspergillus niger (strain ATCC 1015 / CBS 113.46 / FGSC A1144 / LSHB Ac4 / NCTC 3858a / NRRL 328 / USDA 3528.7).